We begin with the raw amino-acid sequence, 553 residues long: Solute carrier family 45 member 3 (553 aa).

11 consecutive transmembrane segments (helical) span residues 19–39 (LLINLLTFGLEVCLAAGITYV), 52–72 (FMTMVLGIGPVLGLVSVPLLG), 88–108 (FIWALSLGILLSLFLIPRAGW), 120–140 (LELALLILGVGLLDFCGQVCF), 161–181 (YSVYAFMISLGGCLGYLLPAI), 198–218 (CLFGLLTLIFLTCVAATLLVA), 275–295 (FVAELCSWMALMTFTLFYTDF), 323–343 (MGSLGLFLQCAISLVFSLVMD), 353–373 (AVYLASVAAFPVAAGATCLSH), 382–402 (AALTGFTFSALQILPYTLASL), and 522–542 (AYMVSAAGLGLVAIYFATQVV).

It belongs to the glycoside-pentoside-hexuronide (GPH) cation symporter transporter (TC 2.A.2) family.

The protein resides in the membrane. The enzyme catalyses sucrose(out) + H(+)(out) = sucrose(in) + H(+)(in). Its function is as follows. Proton-associated sucrose transporter. May be able to transport also glucose and fructose. The chain is Solute carrier family 45 member 3 (SLC45A3) from Macaca fascicularis (Crab-eating macaque).